The following is a 214-amino-acid chain: Ribosomal RNA small subunit methyltransferase G (214 aa).

Residues glycine 77, leucine 82, 128–129 (VE), and arginine 143 contribute to the S-adenosyl-L-methionine site.

The protein belongs to the methyltransferase superfamily. RNA methyltransferase RsmG family.

It is found in the cytoplasm. The enzyme catalyses guanosine(527) in 16S rRNA + S-adenosyl-L-methionine = N(7)-methylguanosine(527) in 16S rRNA + S-adenosyl-L-homocysteine. In terms of biological role, specifically methylates the N7 position of guanine in position 527 of 16S rRNA. The protein is Ribosomal RNA small subunit methyltransferase G of Nitrosomonas eutropha (strain DSM 101675 / C91 / Nm57).